We begin with the raw amino-acid sequence, 136 residues long: Cystatin-2 (136 aa).

An N-terminal signal peptide occupies residues 1 to 24; sequence MALLRGFLVCSLLLLSCICKEALG. The Cystatin domain maps to 29–124; sequence GGLENASPEE…CTFEVYNIPW (96 aa). A Secondary area of contact motif is present at residues 73–77; it reads QIVSG. 2 disulfides stabilise this stretch: Cys-91–Cys-101 and Cys-115–Cys-135.

The protein belongs to the cystatin family. As to expression, expressed by the venom gland.

The protein localises to the secreted. Its function is as follows. Inhibits various C1 cysteine proteases including cathepsin L, papain and cathepsin B. This protein has no toxic activity and its function in the venom is unknown. It may play a role as housekeeping or regulatory protein. This is Cystatin-2 from Crotalus adamanteus (Eastern diamondback rattlesnake).